Here is a 312-residue protein sequence, read N- to C-terminus: Non-structural protein 12A (312 aa).

Residues 1–23 (MFKSGSGSLKRSGSISSVKSFSG) show a composition bias toward low complexity. Disordered regions lie at residues 1 to 37 (MFKSGSGSLKRSGSISSVKSFSGDSEKGLPPISRGSV), 62 to 97 (FVPEKTKSEGNLKNKSSVITGNFGSSGPTNAHYNQN), and 112 to 159 (SSKG…SHGT). A compositionally biased stretch (basic and acidic residues) spans 63 to 73 (VPEKTKSEGNL). Positions 74–97 (KNKSSVITGNFGSSGPTNAHYNQN) are enriched in polar residues. Positions 122-134 (DARHTATDSRLSQ) are enriched in basic and acidic residues. Polar residues predominate over residues 135 to 154 (EVKQPFSEENASGNDLNTGR).

It belongs to the phytoreovirus non-structural protein Pns12A family.

The protein localises to the host cytoplasm. Functionally, constituent of viral factories. The protein is Non-structural protein 12A of Rice dwarf virus (isolate O) (RDV).